Reading from the N-terminus, the 89-residue chain is Small ribosomal subunit protein uS15 (89 aa).

Residues 1–21 (MSIAAERKAEVIKTNARKDGD) are compositionally biased toward basic and acidic residues. The disordered stretch occupies residues 1–24 (MSIAAERKAEVIKTNARKDGDTGS).

Belongs to the universal ribosomal protein uS15 family. As to quaternary structure, part of the 30S ribosomal subunit. Forms a bridge to the 50S subunit in the 70S ribosome, contacting the 23S rRNA.

In terms of biological role, one of the primary rRNA binding proteins, it binds directly to 16S rRNA where it helps nucleate assembly of the platform of the 30S subunit by binding and bridging several RNA helices of the 16S rRNA. Forms an intersubunit bridge (bridge B4) with the 23S rRNA of the 50S subunit in the ribosome. In Rhodopseudomonas palustris (strain BisA53), this protein is Small ribosomal subunit protein uS15.